The sequence spans 365 residues: Peptide chain release factor 2 (365 aa).

Position 251 is an N5-methylglutamine (Gln251).

This sequence belongs to the prokaryotic/mitochondrial release factor family. In terms of processing, methylated by PrmC. Methylation increases the termination efficiency of RF2.

The protein localises to the cytoplasm. Peptide chain release factor 2 directs the termination of translation in response to the peptide chain termination codons UGA and UAA. In Sulfurimonas denitrificans (strain ATCC 33889 / DSM 1251) (Thiomicrospira denitrificans (strain ATCC 33889 / DSM 1251)), this protein is Peptide chain release factor 2.